Reading from the N-terminus, the 337-residue chain is Diacylglycerol acyltransferase/mycolyltransferase Ag85A (337 aa).

The first 42 residues, 1 to 42, serve as a signal peptide directing secretion; that stretch reads MKLVDRFRGAATGTSRRLMVGAVGAALLSGLVGFVGGSATAS. A substrate-binding site is contributed by 85–86; it reads MR. Residues 101–111 are fibronectin-binding; the sequence is FEWYYQSGISV. Cys130 and Cys135 are joined by a disulfide. Positions 169 and 197 each coordinate substrate. The active-site Nucleophile is the Ser169. Glu273 is a catalytic residue. Residues 275-278, Lys282, and 305-307 each bind substrate; these read FVRT and HSW. Residue His305 is part of the active site.

Belongs to the mycobacterial A85 antigen family. In terms of assembly, homodimer.

Its subcellular location is the secreted. The protein localises to the cell wall. It localises to the cytoplasm. It catalyses the reaction an acyl-CoA + a 1,2-diacyl-sn-glycerol = a triacyl-sn-glycerol + CoA. The enzyme catalyses 2 alpha,alpha'-trehalose 6-mycolate = alpha,alpha'-trehalose 6,6'-bismycolate + alpha,alpha-trehalose. Its function is as follows. The antigen 85 proteins (FbpA, FbpB, FbpC) are responsible for the high affinity of mycobacteria for fibronectin, a large adhesive glycoprotein, which facilitates the attachment of M.tuberculosis to murine alveolar macrophages (AMs). They also help to maintain the integrity of the cell wall by catalyzing the transfer of mycolic acids to cell wall arabinogalactan, and through the synthesis of alpha,alpha-trehalose dimycolate (TDM, cord factor). They catalyze the transfer of a mycoloyl residue from one molecule of alpha,alpha-trehalose monomycolate (TMM) to another TMM, leading to the formation of TDM. FbpA mediates triacylglycerol (TAG) formation with long-chain acyl-CoA as the acyl donor and 1,2-dipalmitoyl-sn-glycerol (1,2-dipalmitin) as the acyl acceptor. It has a preference for C26:0-CoA over C18:1-CoA. In Mycobacterium ulcerans, this protein is Diacylglycerol acyltransferase/mycolyltransferase Ag85A (fbpA).